Consider the following 664-residue polypeptide: Prelamin-A/C (664 aa).

Position 1 is an N-acetylmethionine (methionine 1). The interval 1 to 25 is disordered; it reads METPSQRRATRSGAQASSTPLSPTR. The segment at 1-33 is head; the sequence is METPSQRRATRSGAQASSTPLSPTRITRLQEKE. The interval 1 to 130 is interaction with MLIP; the sequence is METPSQRRAT…TKKEGDLIAA (130 aa). Position 3 is a phosphothreonine (threonine 3). A Phosphoserine modification is found at serine 5. Threonine 10 is modified (phosphothreonine). Phosphoserine occurs at positions 12 and 18. The residue at position 19 (threonine 19) is a Phosphothreonine. At serine 22 the chain carries Phosphoserine; by CDK1. One can recognise an IF rod domain in the interval 31–387; that stretch reads EKEDLQELND…KLLEGEEERL (357 aa). The residue at position 32 (lysine 32) is an N6-acetyllysine; alternate. At lysine 32 the chain carries N6-succinyllysine; alternate. Residue lysine 32 forms a Glycyl lysine isopeptide (Lys-Gly) (interchain with G-Cter in SUMO2); alternate linkage. The tract at residues 34 to 70 is coil 1A; that stretch reads DLQELNDRLAVYIDRVRSLETENAGLRLRITESEEVV. Residues serine 51, serine 66, and serine 71 each carry the phosphoserine modification. Residues 71–80 are linker 1; sequence SREVSGIKAA. 2 positions are modified to N6-acetyllysine: lysine 78 and lysine 97. A coil 1B region spans residues 81-218; sequence YEAELGDARK…NIYSEELRET (138 aa). Lysine 97 participates in a covalent cross-link: Glycyl lysine isopeptide (Lys-Gly) (interchain with G-Cter in SUMO2). Phosphoserine is present on serine 107. Residues lysine 108, lysine 114, lysine 123, lysine 135, lysine 144, and lysine 155 each carry the N6-acetyllysine modification. Lysine 171 bears the N6-acetyllysine; alternate mark. An N6-succinyllysine; alternate modification is found at lysine 171. Lysine 171 participates in a covalent cross-link: Glycyl lysine isopeptide (Lys-Gly) (interchain with G-Cter in SUMO2); alternate. An N6-acetyllysine mark is found at lysine 180, lysine 201, and lysine 208. Lysine 201 participates in a covalent cross-link: Glycyl lysine isopeptide (Lys-Gly) (interchain with G-Cter in SUMO2); alternate. Lysine 201 is covalently cross-linked (Glycyl lysine isopeptide (Lys-Gly) (interchain with G-Cter in SUMO); alternate). A Glycyl lysine isopeptide (Lys-Gly) (interchain with G-Cter in SUMO2) cross-link involves residue lysine 208. At serine 212 the chain carries Phosphoserine. Residues lysine 219 and lysine 233 each participate in a glycyl lysine isopeptide (Lys-Gly) (interchain with G-Cter in SUMO2) cross-link. Residues 219–242 are linker 2; that stretch reads KRRHETRLVEIDNGKQREFESRLA. N6-acetyllysine occurs at positions 233, 260, 265, and 270. The coil 2 stretch occupies residues 243–383; that stretch reads DALQELRAQH…HAYRKLLEGE (141 aa). Positions 259 to 331 are necessary and sufficient for the interaction with IFFO1; it reads YKKELEKTYS…DLEDSLARER (73 aa). Lysine 260 is covalently cross-linked (Glycyl lysine isopeptide (Lys-Gly) (interchain with G-Cter in SUMO2); alternate). Lysine 270 participates in a covalent cross-link: Glycyl lysine isopeptide (Lys-Gly) (interchain with G-Cter in SUMO2); alternate. A Phosphoserine modification is found at serine 277. Position 282 is a phosphoserine; by ATR (serine 282). Serine 301 and serine 307 each carry phosphoserine. Lysine 311 participates in a covalent cross-link: Glycyl lysine isopeptide (Lys-Gly) (interchain with G-Cter in SUMO2); alternate. Residues lysine 311, lysine 316, and lysine 341 each carry the N6-acetyllysine modification. Glycyl lysine isopeptide (Lys-Gly) (interchain with G-Cter in SUMO2) cross-links involve residues lysine 366 and lysine 378. Residues 384–442 are disordered; it reads EERLRLSPSPTSQRSRGRASSHSSQTQGGGSVTKKRKLESTESRSSFSQHARTSGRVAV. The segment at 384–664 is tail; the sequence is EERLRLSPSP…TQSPQNCSIM (281 aa). Serine 390 is subject to Phosphoserine. Serine 392 is subject to Phosphoserine; by CDK1. Serine 395 is subject to Phosphoserine; by ATR. Residues serine 398, serine 403, serine 404, serine 406, serine 407, and serine 414 each carry the phosphoserine modification. A Phosphothreonine modification is found at threonine 416. Lysine 417 is modified (N6-acetyllysine). Residues lysine 417 and lysine 420 each participate in a glycyl lysine isopeptide (Lys-Gly) (interchain with G-Cter in SUMO2) cross-link. A Nuclear localization signal motif is present at residues 417 to 422; sequence KKRKLE. 4 positions are modified to phosphoserine: serine 423, serine 426, serine 429, and serine 431. Residues 426–435 show a composition bias toward polar residues; that stretch reads SRSSFSQHAR. The LTD domain maps to 428 to 545; the sequence is SSFSQHARTS…EEVAMRKLVR (118 aa). Residue lysine 450 forms a Glycyl lysine isopeptide (Lys-Gly) (interchain with G-Cter in SUMO2); alternate linkage. An N6-acetyllysine mark is found at lysine 450 and lysine 457. 2 positions are modified to phosphoserine: serine 458 and serine 463. Residues lysine 470 and lysine 486 each participate in a glycyl lysine isopeptide (Lys-Gly) (interchain with G-Cter in SUMO2) cross-link. Lysine 486 carries the N6-acetyllysine modification. Residues threonine 496, threonine 505, and threonine 510 each carry the phosphothreonine modification. A phosphoserine mark is found at serine 533 and serine 546. Threonine 548 carries the phosphothreonine modification. The interval 552-576 is disordered; the sequence is DDEDEDGDDLLHHHHGSHCSSSGDP. Residues serine 568 and serine 571 each carry the phosphoserine modification. Lysine 597 participates in a covalent cross-link: Glycyl lysine isopeptide (Lys-Gly) (interchain with G-Cter in SUMO2); alternate. A Glycyl lysine isopeptide (Lys-Gly) (interchain with G-Cter in SUMO1); alternate cross-link involves residue lysine 597. The segment at 598 to 619 is disordered; the sequence is ASASGSGAQVGGPISSGSSASS. Phosphoserine occurs at positions 612, 613, 616, and 619. Serine 625 and serine 628 each carry an O-linked (GlcNAc) serine glycan. Phosphoserine occurs at positions 628, 632, 636, and 652. A propeptide spans 647–661 (removed in Lamin-A/C form); that stretch reads LLGNSSPRTQSPQNC. A Cysteine methyl ester modification is found at cysteine 661. A lipid anchor (S-farnesyl cysteine) is attached at cysteine 661. Residues 662–664 constitute a propeptide, removed in Prelamin-A/C form and in Lamin-A/C form; the sequence is SIM.

The protein belongs to the intermediate filament family. In terms of assembly, homodimer of lamin A and lamin C. Lamin dimers then assemble into dimeric head-to-tail polymers. Ultimately, two head-to-tail polymers assemble laterally into a protofilament with a uniformly shaped rod of 3.5 nm in diameter. Interacts with lamin-associated polypeptides IA, IB and TMPO-alpha, RB1 and with emerin. Interacts with SREBF1, SREBF2, SUN2 and TMEM43. Interacts with TMEM201. Proteolytically processed isoform A interacts with NARF. Interacts with SUN1. Interacts with MLIP. Interacts with DMPK; may regulate nuclear envelope stability. Interacts with SUV39H1; the interaction increases stability of SUV39H1. Interacts with SYNE2. Interacts with ITSN1 isoform 2. Interacts with IFFO1; enables the formation of an interior nucleoskeleton that is recruited to DNA double-strand breaks. Interacts with EMD. As to quaternary structure, interacts (via C-terminus) with LEMD2 (via N-terminus) (in vitro). Post-translationally, proteolytic cleavage of the C-terminal of 18 residues of prelamin-A/C results in the production of lamin-A/C. The prelamin-A/C maturation pathway includes farnesylation of CAAX motif by protein farnesyltransferase (FNTA and FNTB), removal of the last three amino acids (-AAX) by RCE1/FACE2 and/or ZMPSTE24, methylation of the C-terminal cysteine by ICMT and endoproteolytic removal of the last 15 C-terminal amino acids by ZMPSTE24. Proteolytic cleavage requires prior farnesylation and methylation, and absence of these blocks cleavage. Farnesylation of prelamin-A/C facilitates nuclear envelope targeting. In terms of processing, phosphorylation plays a key role in lamin organization, subcellular localization and nuclear envelope disintegration. Phosphorylation by CDK1 at Ser-22 and Ser-392 at the onset of mitosis drives lamin disassembly and nuclear envelope breakdown. Phosphorylation at Ser-22 and Ser-392 during interphase promotes localization to the nucleoplasm and regulates lamina assembly. Phosphorylation at Ser-22, Ser-392 and Ser-628 during interphase causes redistribution between the nucleus and the cytoplasm. Phosphorylation at Ser-22 by CDK1 regulates matrix stiffness. Phosphorylation status of Ser-22 determines its localization between double-strand break (DSB) sites and the nuclear matrix. Phosphorylated by ATR at Ser-282 in response to DNA damage, leading to lamin disassembly and nuclear envelope rupture. Phosphorylation also regulates stability in micronuclei arising from genome instability: phosphorylation at Ser-395 by ATR in response to genome instability and double-stranded DNA breaks primes LMNA for subsequent phosphorylation at Ser-392 by CDK1 and micronuclei envelope rupture. The rupture of micronuclear envelope triggers the cGAS-STING pathway thereby activating the type I interferon response and innate immunity. Post-translationally, acetylation by KAT8 is required for nuclear architecture. Sumoylation is necessary for the localization to the nuclear envelope. In terms of tissue distribution, in the arteries, prelamin-A/C accumulation is not observed in young healthy vessels but is prevalent in medial vascular smooth muscle cells (VSMCs) from aged individuals and in atherosclerotic lesions, where it often colocalizes with senescent and degenerate VSMCs. Prelamin-A/C expression increases with age and disease. In normal aging, the accumulation of prelamin-A/C is caused in part by the down-regulation of ZMPSTE24/FACE1 in response to oxidative stress.

The protein localises to the nucleus lamina. Its subcellular location is the nucleus envelope. The protein resides in the nucleus. It localises to the nucleoplasm. It is found in the nucleus matrix. The protein localises to the nucleus speckle. Its function is as follows. Lamins are intermediate filament proteins that assemble into a filamentous meshwork, and which constitute the major components of the nuclear lamina, a fibrous layer on the nucleoplasmic side of the inner nuclear membrane. Lamins provide a framework for the nuclear envelope, bridging the nuclear envelope and chromatin, thereby playing an important role in nuclear assembly, chromatin organization, nuclear membrane and telomere dynamics. Lamin A and C also regulate matrix stiffness by conferring nuclear mechanical properties. The structural integrity of the lamina is strictly controlled by the cell cycle, as seen by the disintegration and formation of the nuclear envelope in prophase and telophase, respectively. Lamin A and C are present in equal amounts in the lamina of mammals. Also invoved in DNA repair: recruited by DNA repair proteins XRCC4 and IFFO1 to the DNA double-strand breaks (DSBs) to prevent chromosome translocation by immobilizing broken DNA ends. Required for normal development of peripheral nervous system and skeletal muscle and for muscle satellite cell proliferation. Required for osteoblastogenesis and bone formation. Also prevents fat infiltration of muscle and bone marrow, helping to maintain the volume and strength of skeletal muscle and bone. Required for cardiac homeostasis. Prelamin-A/C can accelerate smooth muscle cell senescence. It acts to disrupt mitosis and induce DNA damage in vascular smooth muscle cells (VSMCs), leading to mitotic failure, genomic instability, and premature senescence. This chain is Prelamin-A/C (LMNA), found in Homo sapiens (Human).